The following is a 174-amino-acid chain: ATP-dependent protease subunit HslV (174 aa).

Thr-2 is a catalytic residue. 3 residues coordinate Na(+): Ala-156, Cys-159, and Thr-162.

Belongs to the peptidase T1B family. HslV subfamily. As to quaternary structure, a double ring-shaped homohexamer of HslV is capped on each side by a ring-shaped HslU homohexamer. The assembly of the HslU/HslV complex is dependent on binding of ATP.

It is found in the cytoplasm. It catalyses the reaction ATP-dependent cleavage of peptide bonds with broad specificity.. Allosterically activated by HslU binding. Protease subunit of a proteasome-like degradation complex believed to be a general protein degrading machinery. This is ATP-dependent protease subunit HslV from Agrobacterium fabrum (strain C58 / ATCC 33970) (Agrobacterium tumefaciens (strain C58)).